The primary structure comprises 536 residues: Chaperonin GroEL 1 (536 aa).

Residues 29–32, 86–90, Gly-413, 476–478, and Asp-492 each bind ATP; these read TLGP, DGTTT, and NAA.

This sequence belongs to the chaperonin (HSP60) family. Forms a cylinder of 14 subunits composed of two heptameric rings stacked back-to-back. Interacts with the co-chaperonin GroES.

Its subcellular location is the cytoplasm. The enzyme catalyses ATP + H2O + a folded polypeptide = ADP + phosphate + an unfolded polypeptide.. Functionally, together with its co-chaperonin GroES, plays an essential role in assisting protein folding. The GroEL-GroES system forms a nano-cage that allows encapsulation of the non-native substrate proteins and provides a physical environment optimized to promote and accelerate protein folding. The chain is Chaperonin GroEL 1 from Nocardia farcinica (strain IFM 10152).